Reading from the N-terminus, the 502-residue chain is ATP synthase subunit alpha (502 aa).

Gly169–Thr176 lines the ATP pocket.

This sequence belongs to the ATPase alpha/beta chains family. In terms of assembly, F-type ATPases have 2 components, CF(1) - the catalytic core - and CF(0) - the membrane proton channel. CF(1) has five subunits: alpha(3), beta(3), gamma(1), delta(1), epsilon(1). CF(0) has three main subunits: a(1), b(2) and c(9-12). The alpha and beta chains form an alternating ring which encloses part of the gamma chain. CF(1) is attached to CF(0) by a central stalk formed by the gamma and epsilon chains, while a peripheral stalk is formed by the delta and b chains.

The protein resides in the cell inner membrane. The catalysed reaction is ATP + H2O + 4 H(+)(in) = ADP + phosphate + 5 H(+)(out). Its function is as follows. Produces ATP from ADP in the presence of a proton gradient across the membrane. The alpha chain is a regulatory subunit. This is ATP synthase subunit alpha from Geobacter sp. (strain M21).